Consider the following 150-residue polypeptide: MVHATSPLLLLLLLSLALVAPSLSARKCSLTGEWDNDLGSIMTIGAVNDNGEFDGTYITAVADNPGNITLSPLLGIQHKRASQPTFGFTVHWNFSESTSVFVGQCFVDRSGKEVLKTKWLQRLAVDDISDDWIATRVGNNDFTRQHTVEE.

An N-terminal signal peptide occupies residues 1–24 (MVHATSPLLLLLLLSLALVAPSLS). In terms of domain architecture, Avidin-like spans 26–147 (RKCSLTGEWD…GNNDFTRQHT (122 aa)). An intrachain disulfide couples cysteine 28 to cysteine 105. Asparagine 36, serine 40, tyrosine 57, threonine 59, and aspartate 63 together coordinate biotin. Residues asparagine 67 and asparagine 93 are each glycosylated (N-linked (GlcNAc...) asparagine). Biotin contacts are provided by serine 95, serine 99, and asparagine 140.

Homotetramer. Post-translationally, glycosylated.

The protein localises to the secreted. In terms of biological role, forms a strong non-covalent specific complex with biotin. This Gallus gallus (Chicken) protein is Avidin-related protein 2 (AVR2).